Here is a 623-residue protein sequence, read N- to C-terminus: Glutathione import ATP-binding protein GsiA (623 aa).

ABC transporter domains lie at 15–269 (VSGL…QTLL) and 325–564 (LRSG…RKLM). Residues 49-56 (GESGSGKS) and 357-364 (GESGSGKS) each bind ATP.

The protein belongs to the ABC transporter superfamily. Glutathione importer (TC 3.A.1.5.11) family. In terms of assembly, the complex is composed of two ATP-binding proteins (GsiA), two transmembrane proteins (GsiC and GsiD) and a solute-binding protein (GsiB).

The protein localises to the cell inner membrane. It carries out the reaction glutathione(out) + ATP + H2O = glutathione(in) + ADP + phosphate + H(+). Functionally, part of the ABC transporter complex GsiABCD involved in glutathione import. Responsible for energy coupling to the transport system. The polypeptide is Glutathione import ATP-binding protein GsiA (Salmonella paratyphi A (strain ATCC 9150 / SARB42)).